Consider the following 139-residue polypeptide: Large ribosomal subunit protein uL16 (139 aa).

It belongs to the universal ribosomal protein uL16 family. In terms of assembly, part of the 50S ribosomal subunit.

Its function is as follows. Binds 23S rRNA and is also seen to make contacts with the A and possibly P site tRNAs. In Chlorobium phaeobacteroides (strain DSM 266 / SMG 266 / 2430), this protein is Large ribosomal subunit protein uL16.